A 259-amino-acid polypeptide reads, in one-letter code: Phosphate import ATP-binding protein PstB 1 (259 aa).

Residues 13 to 254 enclose the ABC transporter domain; it reads IETKDVDLFY…PAEKETEDYI (242 aa). Position 45-52 (45-52) interacts with ATP; sequence GPSGCGKS.

It belongs to the ABC transporter superfamily. Phosphate importer (TC 3.A.1.7) family. As to quaternary structure, the complex is composed of two ATP-binding proteins (PstB), two transmembrane proteins (PstC and PstA) and a solute-binding protein (PstS).

It localises to the cell membrane. It catalyses the reaction phosphate(out) + ATP + H2O = ADP + 2 phosphate(in) + H(+). Its function is as follows. Part of the ABC transporter complex PstSACB involved in phosphate import. Responsible for energy coupling to the transport system. The polypeptide is Phosphate import ATP-binding protein PstB 1 (Listeria innocua serovar 6a (strain ATCC BAA-680 / CLIP 11262)).